The following is a 578-amino-acid chain: Membrane protein insertase YidC (578 aa).

Residues 3-23 (IQRSILIVALAVVSYLLVLQW) traverse the membrane as a helical segment. The interval 34–72 (AASASMNTTQGLPDTPSASGTSSDVPTAQSSAAGSEAAD) is disordered. Residues 37-66 (ASMNTTQGLPDTPSASGTSSDVPTAQSSAA) are compositionally biased toward polar residues. A run of 5 helical transmembrane segments spans residues 361-381 (LELT…FWLL), 387-407 (LIGN…LAFF), 457-477 (LGGC…YWVL), 500-520 (PFFI…MLNP), and 535-555 (PIIF…YWVV).

This sequence belongs to the OXA1/ALB3/YidC family. Type 1 subfamily. As to quaternary structure, interacts with the Sec translocase complex via SecD. Specifically interacts with transmembrane segments of nascent integral membrane proteins during membrane integration.

It is found in the cell inner membrane. Functionally, required for the insertion and/or proper folding and/or complex formation of integral membrane proteins into the membrane. Involved in integration of membrane proteins that insert both dependently and independently of the Sec translocase complex, as well as at least some lipoproteins. Aids folding of multispanning membrane proteins. The protein is Membrane protein insertase YidC of Pseudomonas aeruginosa (strain ATCC 15692 / DSM 22644 / CIP 104116 / JCM 14847 / LMG 12228 / 1C / PRS 101 / PAO1).